Consider the following 723-residue polypeptide: MAGRLREERKYRQKNRGLVQERIRLSLVVWESRKQGTSGQAKNFITRTQAVRKLQISLPDFRRLCIFKGIYPREPRNKKKASKAATPSTTFYYTRDIQYLLHEPLLKKFREQKALSKKIARALGRGEVGNAARLEKNNAPKLSLDHIIKERYPTFIDALRDLDDALSLLFLFANLPSTTSVPAKTITLCQRLCHEFQHYLIATNSLRKSFLSIKGIYYQATILGQDIMWLVPYRFVQRVTGDVDYRIMGTFVEFYTTLLGFVNYKLYTSIGLVYPPKFDKSSDERGAELAAFTLEGRYFGEAHKAIETSRQPNGSAEKAATTSKELQAKVDNILEKTQLDTDPTDQSTEDQEENIEAIDKFEPIAPEADSLPQPQISGDEAGSLFATFTFYISREAPRAPLEFLLRSFGCKRIGWDSVLGDGAFTHDELDARITHQIVDRPQLPQASLPPLPKNPEDGTEAAPRPGTRVPGRTYIQPQWVWDCINEGKLLRPDLYAPGATLPPHLSPWVKPSERGYDPRASLADQEEEGEAERAAEAEEYENDEQEESGEESTKSKQSKELLANLARDSGDENTSGDESVNGGMDIAMAEDTDESSDDGDGADKFEGFDQDEDMSSESEDEEEKARSQHQKELEAEAAGLPFSASSQAESGTIRGKKQQAPLAKKRAAQKKKEEEELERQKMMMSRKKRKLLDKMIYSNKKQDAEAEKLRQKRRKIEQGLNKK.

A BRCT domain is found at 380-497 (EAGSLFATFT…KLLRPDLYAP (118 aa)). Disordered regions lie at residues 440–471 (RPQLPQASLPPLPKNPEDGTEAAPRPGTRVPG) and 501–723 (LPPH…LNKK). A coiled-coil region spans residues 522 to 551 (LADQEEEGEAERAAEAEEYENDEQEESGEE). Composition is skewed to acidic residues over residues 537-550 (AEEYENDEQEESGE), 588-600 (MAEDTDESSDDGD), and 608-622 (FDQDEDMSSESEDEE). Basic and acidic residues-rich tracts occupy residues 623–634 (EKARSQHQKELE), 670–681 (KKKEEEELERQK), and 700–709 (KKQDAEAEKL). Residues 656–723 (KKQQAPLAKK…RKIEQGLNKK (68 aa)) adopt a coiled-coil conformation. Over residues 710 to 723 (RQKRRKIEQGLNKK) the composition is skewed to basic residues.

Belongs to the pescadillo family. In terms of assembly, component of the NOP7 complex, composed of ERB1, NOP7 and YTM1. The complex is held together by ERB1, which interacts with NOP7 via its N-terminal domain and with YTM1 via a high-affinity interaction between the seven-bladed beta-propeller domains of the 2 proteins. The NOP7 complex associates with the 66S pre-ribosome.

It is found in the nucleus. It localises to the nucleolus. The protein localises to the nucleoplasm. Its function is as follows. Component of the NOP7 complex, which is required for maturation of the 25S and 5.8S ribosomal RNAs and formation of the 60S ribosome. This Ajellomyces capsulatus (strain NAm1 / WU24) (Darling's disease fungus) protein is Pescadillo homolog.